A 184-amino-acid chain; its full sequence is Ribosome-recycling factor (184 aa).

This sequence belongs to the RRF family.

It is found in the cytoplasm. Responsible for the release of ribosomes from messenger RNA at the termination of protein biosynthesis. May increase the efficiency of translation by recycling ribosomes from one round of translation to another. This chain is Ribosome-recycling factor, found in Caldicellulosiruptor saccharolyticus (strain ATCC 43494 / DSM 8903 / Tp8T 6331).